The primary structure comprises 293 residues: RNA pseudouridylate synthase domain-containing protein 1 (293 aa).

Asp67 is an active-site residue.

The protein belongs to the pseudouridine synthase RluA family.

This Danio rerio (Zebrafish) protein is RNA pseudouridylate synthase domain-containing protein 1 (rpusd1).